The primary structure comprises 170 residues: Capsid protein (170 aa).

Basic residues predominate over residues 1–19 (MAQLRWGRKGVRSQRRKYS). A disordered region spans residues 1–25 (MAQLRWGRKGVRSQRRKYSRPVAYK).

It belongs to the nanoviridae capsid protein family.

Its subcellular location is the virion. The chain is Capsid protein (DNA-S) from Subterranean clover stunt virus (strain J) (SCSV).